The following is a 235-amino-acid chain: Large ribosomal subunit protein uL1 (235 aa).

The protein belongs to the universal ribosomal protein uL1 family. Part of the 50S ribosomal subunit.

Functionally, binds directly to 23S rRNA. The L1 stalk is quite mobile in the ribosome, and is involved in E site tRNA release. Protein L1 is also a translational repressor protein, it controls the translation of the L11 operon by binding to its mRNA. This Synechococcus sp. (strain WH7803) protein is Large ribosomal subunit protein uL1.